The following is a 205-amino-acid chain: Small ribosomal subunit protein uS4 (205 aa).

Positions 1-16 (MSKRESSKYKIDRRMG) are enriched in basic and acidic residues. The disordered stretch occupies residues 1 to 46 (MSKRESSKYKIDRRMGENIWGRPKSPVNRREYGPGQHGQRRKGKLS). One can recognise an S4 RNA-binding domain in the interval 94-157 (SRLDAIVYRA…KQLVTVLEAV (64 aa)).

It belongs to the universal ribosomal protein uS4 family. As to quaternary structure, part of the 30S ribosomal subunit. Contacts protein S5. The interaction surface between S4 and S5 is involved in control of translational fidelity.

Its function is as follows. One of the primary rRNA binding proteins, it binds directly to 16S rRNA where it nucleates assembly of the body of the 30S subunit. Functionally, with S5 and S12 plays an important role in translational accuracy. In Rhizobium etli (strain ATCC 51251 / DSM 11541 / JCM 21823 / NBRC 15573 / CFN 42), this protein is Small ribosomal subunit protein uS4.